The following is a 384-amino-acid chain: 1-deoxy-D-xylulose 5-phosphate reductoisomerase (384 aa).

Positions 10, 11, 12, 13, 37, 38, and 124 each coordinate NADPH. Lysine 125 lines the 1-deoxy-D-xylulose 5-phosphate pocket. Residue glutamate 126 coordinates NADPH. Aspartate 150 is a Mn(2+) binding site. Serine 151, glutamate 152, serine 176, and histidine 199 together coordinate 1-deoxy-D-xylulose 5-phosphate. Glutamate 152 serves as a coordination point for Mn(2+). Glycine 205 is a binding site for NADPH. Residues serine 212, asparagine 217, lysine 218, and glutamate 221 each coordinate 1-deoxy-D-xylulose 5-phosphate. Mn(2+) is bound at residue glutamate 221.

Belongs to the DXR family. Mg(2+) serves as cofactor. Requires Mn(2+) as cofactor.

It carries out the reaction 2-C-methyl-D-erythritol 4-phosphate + NADP(+) = 1-deoxy-D-xylulose 5-phosphate + NADPH + H(+). The protein operates within isoprenoid biosynthesis; isopentenyl diphosphate biosynthesis via DXP pathway; isopentenyl diphosphate from 1-deoxy-D-xylulose 5-phosphate: step 1/6. Its function is as follows. Catalyzes the NADPH-dependent rearrangement and reduction of 1-deoxy-D-xylulose-5-phosphate (DXP) to 2-C-methyl-D-erythritol 4-phosphate (MEP). The sequence is that of 1-deoxy-D-xylulose 5-phosphate reductoisomerase from Clostridium perfringens (strain SM101 / Type A).